A 166-amino-acid chain; its full sequence is Ureidoglycolate lyase (166 aa).

The protein belongs to the ureidoglycolate lyase family. In terms of assembly, homodimer. Ni(2+) serves as cofactor.

It carries out the reaction (S)-ureidoglycolate = urea + glyoxylate. The protein operates within nitrogen metabolism; (S)-allantoin degradation. Its function is as follows. Catalyzes the catabolism of the allantoin degradation intermediate (S)-ureidoglycolate, generating urea and glyoxylate. Involved in the utilization of allantoin as nitrogen source. In Azotobacter vinelandii (strain DJ / ATCC BAA-1303), this protein is Ureidoglycolate lyase.